The following is a 560-amino-acid chain: Triacylglyceride transporter MSMEG_3069/MSMEI_2992 (560 aa).

A run of 14 helical transmembrane segments spans residues 16–36, 48–68, 78–98, 108–128, 143–163, 168–188, 200–220, 229–249, 269–289, 307–327, 336–356, 368–388, 411–431, and 477–497; these read LAVL…VDIM, QVTP…PLLG, MLIQ…ALSS, IIQG…AADL, AAQE…VWLF, AVFW…HFSL, VDVI…VGLY, VLPS…VAFF, PFLA…VTLV, AFLL…GGWL, VVLI…HWSV, FTLP…GLVI, VVVA…AWGF, and IFLS…LISG. The interval 362-371 is beta-hairpin; that stretch reads RHNLGLFTLP. The tract at residues 519 to 560 is disordered; it reads IDPYDAGDADDAPTEMLDLPTQVLSAPPSDPGDERPGRHRAP.

This sequence belongs to the major facilitator superfamily. P55 (TC 2.A.1.3.34) family.

It is found in the cell inner membrane. Its activity is regulated as follows. Resistance to ethidium bromide is inhibited by reserpine. In terms of biological role, in association with lipoprotein LprG transports triacyglycerides (TAG) across the inner cell membrane into the periplasm; TAG probably regulates lipid metabolism and growth regulation and plays a structural role in the outer membrane. TAG (and maybe other lipids) enters the central cavity of the P55 transporter from within the cell inner membrane via clefts on the cytoplasmic face of P55 between TM5-TM8 and TM2-TM11. From there the lipid is probably transferred to the hydrophobic cavity of LprG. Confers resistance to ethidium bromide, possibly acting as an efflux pump, requires LprG lipoprotein for normal function. Export of ethidium bromide can be complemented by the equivalent operon from M.tuberculosis (lprG-Rv1410c). Involved in drug susceptibilty, its expression alone partially complements the antibiotic susceptibilty of a double lprG-mfs deletion. Probably does not function as a bona fide drug efflux pump, but instead plays a role in outer membrane biogenesis. Probably required with LprG for normal surface localization of lipoarabinomannan (LAM). The sequence is that of Triacylglyceride transporter MSMEG_3069/MSMEI_2992 from Mycolicibacterium smegmatis (strain ATCC 700084 / mc(2)155) (Mycobacterium smegmatis).